The following is a 492-amino-acid chain: UTP--glucose-1-phosphate uridylyltransferase (492 aa).

UTP is bound by residues 110–113 (LNGG), Lys-124, Gln-183, and Gly-210. 112 to 113 (GG) contacts substrate. Lys-124 provides a ligand contact to Mg(2+). Substrate is bound by residues His-211 and 239-241 (NID). Positions 241 and 379 each coordinate UTP. A Mg(2+)-binding site is contributed by Asp-241. Lys-379 is an active-site residue. Positions 441–492 (VLTVSGNVLFGKNVVLKGTVIILADEKSKICVPDGSVLEDNIIYGNLPIIDH) are oligomerization.

Belongs to the UDPGP type 1 family. Homooctamer.

It catalyses the reaction alpha-D-glucose 1-phosphate + UTP + H(+) = UDP-alpha-D-glucose + diphosphate. Functionally, plays a central role as a glucosyl donor in cellular metabolic pathways. This is UTP--glucose-1-phosphate uridylyltransferase (UGP1) from Encephalitozoon cuniculi (strain GB-M1) (Microsporidian parasite).